Consider the following 290-residue polypeptide: MEELINKAQTLVEALPYIRNFYGKTFVIKYGGSTMGDKRLKEKIMEDITLLKYVGVNPVLIHGGGPAISEAMESMDKEARFIQGLRITDSETMSLVEMVLVGKVNKELVSIINRLGGEAVGICGKDGGLIEADKLIFEDKSIDLGHVGSVKKINPEIVLNLIKGGYIPVISPVGSSKEGDTYNINADTVAGKLAVSLKAEKLIFLTDVDGVWSDPSNEKTRVSSLTVNEVKSWIGEGKIKGGMVPKVEACIEAVTCGVNRTHILNGLIPHALLLEIFTDRGIGTMILKER.

Substrate is bound by residues Gly-64 to Gly-65, Arg-86, and Asn-183.

It belongs to the acetylglutamate kinase family. ArgB subfamily.

Its subcellular location is the cytoplasm. The catalysed reaction is N-acetyl-L-glutamate + ATP = N-acetyl-L-glutamyl 5-phosphate + ADP. It functions in the pathway amino-acid biosynthesis; L-arginine biosynthesis; N(2)-acetyl-L-ornithine from L-glutamate: step 2/4. In terms of biological role, catalyzes the ATP-dependent phosphorylation of N-acetyl-L-glutamate. This is Acetylglutamate kinase from Halothermothrix orenii (strain H 168 / OCM 544 / DSM 9562).